Consider the following 278-residue polypeptide: Juvenile hormone acid O-methyltransferase (278 aa).

It belongs to the methyltransferase superfamily. In terms of tissue distribution, specifically expressed in the corpora allata (CA).

The catalysed reaction is (2E,6E)-farnesoate + S-adenosyl-L-methionine = methyl (2E,6E)-farnesoate + S-adenosyl-L-homocysteine. It catalyses the reaction juvenile hormone III carboxylate + S-adenosyl-L-methionine = juvenile hormone III + S-adenosyl-L-homocysteine. O-methyltransferase that transfers a methyl group from S-adenosyl-L-methionine (SAM) to the carboxyl group of juvenile hormone acids to produce active juvenile hormones in the corpora allata, the last step during juvenile hormone biosynthesis. Also able to methylate farnesoate to methyl farnesoate. The polypeptide is Juvenile hormone acid O-methyltransferase (Bombyx mori (Silk moth)).